The chain runs to 395 residues: S-adenosylmethionine synthase (395 aa).

Histidine 16 contacts ATP. Residue aspartate 18 participates in Mg(2+) binding. Glutamate 44 contacts K(+). L-methionine contacts are provided by glutamate 57 and glutamine 100. The interval glutamine 100–arginine 110 is flexible loop. Residues aspartate 167–lysine 169, arginine 233–phenylalanine 234, aspartate 242, arginine 248–lysine 249, alanine 265, and lysine 269 contribute to the ATP site. Aspartate 242 contacts L-methionine. L-methionine is bound at residue lysine 273.

The protein belongs to the AdoMet synthase family. In terms of assembly, homotetramer; dimer of dimers. Mg(2+) is required as a cofactor. Requires K(+) as cofactor.

Its subcellular location is the cytoplasm. The catalysed reaction is L-methionine + ATP + H2O = S-adenosyl-L-methionine + phosphate + diphosphate. Its pathway is amino-acid biosynthesis; S-adenosyl-L-methionine biosynthesis; S-adenosyl-L-methionine from L-methionine: step 1/1. Its function is as follows. Catalyzes the formation of S-adenosylmethionine (AdoMet) from methionine and ATP. The overall synthetic reaction is composed of two sequential steps, AdoMet formation and the subsequent tripolyphosphate hydrolysis which occurs prior to release of AdoMet from the enzyme. The polypeptide is S-adenosylmethionine synthase (Burkholderia mallei (strain NCTC 10247)).